Here is a 275-residue protein sequence, read N- to C-terminus: Prohibitin-1 (275 aa).

Positions 106–109 match the AIM motif; that stretch reads YQNL.

It belongs to the prohibitin family. In terms of assembly, the mitochondrial prohibitin complex consists of two subunits (PHB1 and PHB2). The subunits assemble into a membrane-associated ring-shaped supercomplex of approximately 1 mDa. Interacts with ATG24/SNX4; the interaction is direct and plays a role in mitophagy.

The protein resides in the mitochondrion inner membrane. Prohibitin probably acts as a holdase/unfoldase for the stabilization of newly synthesized mitochondrial proteins. Involved in mitophagy. Required for the switch to necrotrophic growth. In Colletotrichum higginsianum (strain IMI 349063) (Crucifer anthracnose fungus), this protein is Prohibitin-1.